The sequence spans 246 residues: Bis(5'-nucleosyl)-tetraphosphatase PrpE [asymmetrical] (246 aa).

The protein belongs to the PrpE family. The cofactor is Ni(2+).

The enzyme catalyses P(1),P(4)-bis(5'-guanosyl) tetraphosphate + H2O = GMP + GTP + 2 H(+). Asymmetrically hydrolyzes Ap4p to yield AMP and ATP. In Bacillus cereus (strain ZK / E33L), this protein is Bis(5'-nucleosyl)-tetraphosphatase PrpE [asymmetrical].